A 359-amino-acid chain; its full sequence is 3-dehydroquinate synthase (359 aa).

Residues 71–76, 105–109, 129–130, Lys142, Lys151, and 169–172 each bind NAD(+); these read DGEAHK, GVIGD, TT, and TLHT. 3 residues coordinate Zn(2+): Glu184, His247, and His264.

It belongs to the sugar phosphate cyclases superfamily. Dehydroquinate synthase family. NAD(+) serves as cofactor. The cofactor is Co(2+). Requires Zn(2+) as cofactor.

The protein resides in the cytoplasm. The enzyme catalyses 7-phospho-2-dehydro-3-deoxy-D-arabino-heptonate = 3-dehydroquinate + phosphate. It participates in metabolic intermediate biosynthesis; chorismate biosynthesis; chorismate from D-erythrose 4-phosphate and phosphoenolpyruvate: step 2/7. Functionally, catalyzes the conversion of 3-deoxy-D-arabino-heptulosonate 7-phosphate (DAHP) to dehydroquinate (DHQ). This Neisseria meningitidis serogroup A / serotype 4A (strain DSM 15465 / Z2491) protein is 3-dehydroquinate synthase.